The following is a 247-amino-acid chain: E3 SUMO-protein ligase NSE2 (247 aa).

Met-1 carries the post-translational modification N-acetylmethionine. Glycyl lysine isopeptide (Lys-Gly) (interchain with G-Cter in SUMO2) cross-links involve residues Lys-90 and Lys-107. Position 116 is a phosphoserine (Ser-116). Residues Lys-125 and Lys-130 each participate in a glycyl lysine isopeptide (Lys-Gly) (interchain with G-Cter in SUMO2) cross-link. Residues 154-240 (VDEDMIVTQS…LRRAIESHNK (87 aa)) form an SP-RING-type zinc finger. Residues Cys-185, His-187, Cys-210, and Cys-215 each contribute to the Zn(2+) site.

Belongs to the NSE2 family. In terms of assembly, component of the SMC5-SMC6 complex which consists at least of SMC5, SMC6, NSMCE2, NSMCE1, NSMCE4A or EID3 and NSMCE3. In terms of processing, sumoylated, possibly via autosumoylation.

The protein localises to the nucleus. Its subcellular location is the chromosome. The protein resides in the telomere. It is found in the PML body. It participates in protein modification; protein sumoylation. Functionally, E3 SUMO-protein ligase component of the SMC5-SMC6 complex, a complex involved in DNA double-strand break repair by homologous recombination. Is not be required for the stability of the complex. The complex may promote sister chromatid homologous recombination by recruiting the SMC1-SMC3 cohesin complex to double-strand breaks. Acts as an E3 ligase mediating SUMO attachment to various proteins such as SMC6L1 and TSNAX, the shelterin complex subunits TERF1, TERF2, TINF2 and TERF2IP, RAD51AP1, and maybe the cohesin components RAD21 and STAG2. Required for recruitment of telomeres to PML nuclear bodies. Required for sister chromatid cohesion during prometaphase and mitotic progression. The protein is E3 SUMO-protein ligase NSE2 (Nsmce2) of Mus musculus (Mouse).